The following is a 170-amino-acid chain: Acetyl-CoA decarbonylase/synthase complex subunit epsilon 2 (170 aa).

This sequence belongs to the CdhB family. In terms of assembly, heterotetramer of two alpha and two epsilon subunits. The ACDS complex is made up of alpha, epsilon, beta, gamma and delta subunits with a probable stoichiometry of (alpha(2)epsilon(2))(4)-beta(8)-(gamma(1)delta(1))(8).

It functions in the pathway one-carbon metabolism; methanogenesis from acetate. Part of a complex that catalyzes the reversible cleavage of acetyl-CoA, allowing growth on acetate as sole source of carbon and energy. The alpha-epsilon subcomponent functions as a carbon monoxide dehydrogenase. The precise role of the epsilon subunit is unclear; it may have a stabilizing role within the alpha(2)epsilon(2) component and/or be involved in electron transfer to FAD during a potential FAD-mediated CO oxidation. This chain is Acetyl-CoA decarbonylase/synthase complex subunit epsilon 2 (cdhB2), found in Methanosarcina mazei (strain ATCC BAA-159 / DSM 3647 / Goe1 / Go1 / JCM 11833 / OCM 88) (Methanosarcina frisia).